Reading from the N-terminus, the 139-residue chain is Protein Turandot B (139 aa).

The signal sequence occupies residues 1–21 (MNFNMSMICFALLLIVTLCSA).

Belongs to the Turandot family.

It localises to the secreted. A humoral factor that may play a role in stress tolerance. The polypeptide is Protein Turandot B (Drosophila yakuba (Fruit fly)).